The primary structure comprises 63 residues: Large ribosomal subunit protein bL28 (63 aa).

The protein belongs to the bacterial ribosomal protein bL28 family.

The sequence is that of Large ribosomal subunit protein bL28 (rpmB) from Selenomonas ruminantium.